A 1012-amino-acid polypeptide reads, in one-letter code: Beta-alanine-activating enzyme (1012 aa).

Residues 177-185 (TTGTTGKPK), Asp-411, Arg-426, and Lys-516 contribute to the ATP site.

Belongs to the ATP-dependent AMP-binding enzyme family.

Covalently binds beta-alanine in an ATP-dependent manner to form a thioester bond with its phosphopantetheine group and transfers it to an, as yet, unknown acceptor. May be required for a post-translational protein modification or for post-transcriptional modification of an RNA. The sequence is that of Beta-alanine-activating enzyme from Drosophila melanogaster (Fruit fly).